A 484-amino-acid polypeptide reads, in one-letter code: Regulator of G-protein signaling 9 (484 aa).

In terms of domain architecture, DEP spans 30-105; that stretch reads PDTGVKTQSQ…PDSSLYRFQT (76 aa). Residues 219–280 form the G protein gamma domain; that stretch reads ITAVKKEIMY…ITDDTQFWDL (62 aa). Residues 299–414 enclose the RGS domain; sequence NFSELIRDPK…LKSPIYKEML (116 aa).

Heterodimer with Gbeta5. Interacts with RGS7BP, leading to regulate the subcellular location of the heterodimer formed with Gbeta5. Component of the RGS9-1-Gbeta5 complex composed of RGS9 (RGS9-1), Gbeta5 (GNB5) and RGS9BP. Phosphorylation is decreased by light exposition.

It localises to the membrane. Functionally, inhibits signal transduction by increasing the GTPase activity of G protein alpha subunits thereby driving them into their inactive GDP-bound form. Binds to G(t)-alpha. Involved in phototransduction; key element in the recovery phase of visual transduction. The sequence is that of Regulator of G-protein signaling 9 from Tamias striatus (Eastern chipmunk).